The primary structure comprises 257 residues: Pyrroline-5-carboxylate reductase (257 aa).

This sequence belongs to the pyrroline-5-carboxylate reductase family.

It is found in the cytoplasm. The enzyme catalyses L-proline + NADP(+) = (S)-1-pyrroline-5-carboxylate + NADPH + 2 H(+). It carries out the reaction L-proline + NAD(+) = (S)-1-pyrroline-5-carboxylate + NADH + 2 H(+). The protein operates within amino-acid biosynthesis; L-proline biosynthesis; L-proline from L-glutamate 5-semialdehyde: step 1/1. Its function is as follows. Catalyzes the reduction of 1-pyrroline-5-carboxylate (PCA) to L-proline. In Helicobacter pylori (strain ATCC 700392 / 26695) (Campylobacter pylori), this protein is Pyrroline-5-carboxylate reductase.